A 323-amino-acid chain; its full sequence is Aspartate carbamoyltransferase catalytic subunit (323 aa).

Positions 55 and 56 each coordinate carbamoyl phosphate. An L-aspartate-binding site is contributed by K83. 3 residues coordinate carbamoyl phosphate: R105, H133, and Q136. L-aspartate contacts are provided by R166 and R220. Positions 261 and 262 each coordinate carbamoyl phosphate.

The protein belongs to the aspartate/ornithine carbamoyltransferase superfamily. ATCase family. Heterododecamer (2C3:3R2) of six catalytic PyrB chains organized as two trimers (C3), and six regulatory PyrI chains organized as three dimers (R2).

It carries out the reaction carbamoyl phosphate + L-aspartate = N-carbamoyl-L-aspartate + phosphate + H(+). It participates in pyrimidine metabolism; UMP biosynthesis via de novo pathway; (S)-dihydroorotate from bicarbonate: step 2/3. Functionally, catalyzes the condensation of carbamoyl phosphate and aspartate to form carbamoyl aspartate and inorganic phosphate, the committed step in the de novo pyrimidine nucleotide biosynthesis pathway. The protein is Aspartate carbamoyltransferase catalytic subunit of Acidothermus cellulolyticus (strain ATCC 43068 / DSM 8971 / 11B).